The sequence spans 1461 residues: Gag-Pol polyprotein (1461 aa).

The N-myristoyl glycine; by host moiety is linked to residue G2. The interval 7–31 is interaction with Gp41; the sequence is VLRGKKADELEKIRLRPGGKKKYKL. The short motif at 16-22 is the Nuclear export signal element; sequence LEKIRLR. Residues 26–32 carry the Nuclear localization signal motif; it reads KKKYKLK. The interval 189 to 226 is interaction with human PPIA/CYPA and NUP153; sequence NCVGDHQAAMQIIREIINEEAADWDVAHPIPGPLPAGQ. The interval 277-363 is dimerization/Multimerization of capsid protein p24; it reads YNPTNILDIN…GGPGQKARLM (87 aa). CCHC-type zinc fingers lie at residues 387 to 404 and 408 to 425; these read FKCWNCGKEGHSARQWSA and QGCWKCGKSGHVMANCPD. The tract at residues 436 to 467 is disordered; it reads LGKEGPQLPRGPSPAGANTNSTPIGSSSGPTG. Positions 453 to 467 are enriched in low complexity; sequence NTNSTPIGSSSGPTG. Residues 511–515 are dimerization of protease; sequence PQFSL. In terms of domain architecture, Peptidase A2 spans 530-599; sequence VEVLLDTRAN…TPINIFGRNV (70 aa). The active-site For protease activity; shared with dimeric partner is the D535. 2 dimerization of protease regions span residues 559-565 and 598-610; these read GIGGFIN and NVLTALGMSLNLP. Positions 653–843 constitute a Reverse transcriptase domain; that stretch reads EGQLEEAPPT…PPYRWMGYEL (191 aa). D719, D794, and D795 together coordinate Mg(2+). Residues 836-844 are RT 'primer grip'; the sequence is YRWMGYELW. Positions 1006 to 1022 match the Tryptophan repeat motif motif; sequence WEQWWDNYWQVTWIPDW. The RNase H type-1 domain occupies 1042–1165; that stretch reads VPGAETFYTD…VDHLVSQGIR (124 aa). Mg(2+) is bound by residues D1051, E1086, D1106, and D1157. An Integrase-type; degenerate zinc finger spans residues 1171–1212; it reads EKIEPAQEEHEKYHSNIKELSHKFGIPKLVARQIVNTCAHVQ. The region spanning 1221-1372 is the Integrase catalytic domain; the sequence is QVNAELGTWQ…TPAERIINMI (152 aa). Mg(2+) contacts are provided by D1232, D1284, and E1320. A DNA-binding region (integrase-type) is located at residues 1391-1438; that stretch reads FRVYFREGRDQLWKGPGELLWKGDGAVIVKVGTEIKVVPRRKAKIIKD.

In terms of assembly, homotrimer; further assembles as hexamers of trimers. Interacts with gp41 (via C-terminus). Interacts with host CALM1; this interaction induces a conformational change in the Matrix protein, triggering exposure of the myristate group. Interacts with host AP3D1; this interaction allows the polyprotein trafficking to multivesicular bodies during virus assembly. Part of the pre-integration complex (PIC) which is composed of viral genome, matrix protein, Vpr and integrase. As to quaternary structure, homodimer; the homodimer further multimerizes as homohexamers or homopentamers. Interacts with human PPIA/CYPA. Interacts with human NUP153. Interacts with host PDZD8; this interaction stabilizes the capsid. Interacts with monkey TRIM5; this interaction destabilizes the capsid. Homodimer, whose active site consists of two apposed aspartic acid residues. In terms of assembly, heterodimer of p66 RT and p51 RT (RT p66/p51). Heterodimerization of RT is essential for DNA polymerase activity. The overall folding of the subdomains is similar in p66 RT and p51 RT but the spatial arrangements of the subdomains are dramatically different. As to quaternary structure, homotetramer; may further associate as a homohexadecamer. Part of the pre-integration complex (PIC) which is composed of viral genome, matrix protein, Vpr and integrase. Interacts with human SMARCB1/INI1 and human PSIP1/LEDGF isoform 1. Interacts with human KPNA3; this interaction might play a role in nuclear import of the pre-integration complex. Interacts with human NUP153; this interaction might play a role in nuclear import of the pre-integration complex. Requires Mg(2+) as cofactor. In terms of processing, specific enzymatic cleavages by the viral protease yield mature proteins. The protease is released by autocatalytic cleavage. The polyprotein is cleaved during and after budding, this process is termed maturation. Proteolytic cleavage of p66 RT removes the RNase H domain to yield the p51 RT subunit. Nucleocapsid protein p7 might be further cleaved after virus entry.

The protein localises to the host cell membrane. The protein resides in the host endosome. Its subcellular location is the host multivesicular body. It localises to the virion membrane. It is found in the host nucleus. The protein localises to the host cytoplasm. The protein resides in the virion. The catalysed reaction is Endopeptidase for which the P1 residue is preferably hydrophobic.. It catalyses the reaction Endohydrolysis of RNA in RNA/DNA hybrids. Three different cleavage modes: 1. sequence-specific internal cleavage of RNA. Human immunodeficiency virus type 1 and Moloney murine leukemia virus enzymes prefer to cleave the RNA strand one nucleotide away from the RNA-DNA junction. 2. RNA 5'-end directed cleavage 13-19 nucleotides from the RNA end. 3. DNA 3'-end directed cleavage 15-20 nucleotides away from the primer terminus.. The enzyme catalyses 3'-end directed exonucleolytic cleavage of viral RNA-DNA hybrid.. It carries out the reaction DNA(n) + a 2'-deoxyribonucleoside 5'-triphosphate = DNA(n+1) + diphosphate. Protease: The viral protease is inhibited by many synthetic protease inhibitors (PIs), such as amprenavir, atazanavir, indinavir, loprinavir, nelfinavir, ritonavir and saquinavir. Use of protease inhibitors in tritherapy regimens permit more ambitious therapeutic strategies. Reverse transcriptase/ribonuclease H: RT can be inhibited either by nucleoside RT inhibitors (NRTIs) or by non nucleoside RT inhibitors (NNRTIs). NRTIs act as chain terminators, whereas NNRTIs inhibit DNA polymerization by binding a small hydrophobic pocket near the RT active site and inducing an allosteric change in this region. Classical NRTIs are abacavir, adefovir (PMEA), didanosine (ddI), lamivudine (3TC), stavudine (d4T), tenofovir (PMPA), zalcitabine (ddC), and zidovudine (AZT). Classical NNRTIs are atevirdine (BHAP U-87201E), delavirdine, efavirenz (DMP-266), emivirine (I-EBU), and nevirapine (BI-RG-587). The tritherapies used as a basic effective treatment of AIDS associate two NRTIs and one NNRTI. Mediates, with Gag polyprotein, the essential events in virion assembly, including binding the plasma membrane, making the protein-protein interactions necessary to create spherical particles, recruiting the viral Env proteins, and packaging the genomic RNA via direct interactions with the RNA packaging sequence (Psi). Gag-Pol polyprotein may regulate its own translation, by the binding genomic RNA in the 5'-UTR. At low concentration, the polyprotein would promote translation, whereas at high concentration, the polyprotein would encapsidate genomic RNA and then shut off translation. In terms of biological role, targets the polyprotein to the plasma membrane via a multipartite membrane-binding signal, that includes its myristoylated N-terminus. Matrix protein is part of the pre-integration complex. Implicated in the release from host cell mediated by Vpu. Binds to RNA. Its function is as follows. Forms the conical core that encapsulates the genomic RNA-nucleocapsid complex in the virion. Most core are conical, with only 7% tubular. The core is constituted by capsid protein hexamer subunits. The core is disassembled soon after virion entry. Host restriction factors such as TRIM5-alpha or TRIMCyp bind retroviral capsids and cause premature capsid disassembly, leading to blocks in reverse transcription. Capsid restriction by TRIM5 is one of the factors which restricts HIV-1 to the human species. Host PIN1 apparently facilitates the virion uncoating. On the other hand, interactions with PDZD8 or CYPA stabilize the capsid. Functionally, encapsulates and protects viral dimeric unspliced genomic RNA (gRNA). Binds these RNAs through its zinc fingers. Acts as a nucleic acid chaperone which is involved in rearangement of nucleic acid secondary structure during gRNA retrotranscription. Also facilitates template switch leading to recombination. As part of the polyprotein, participates in gRNA dimerization, packaging, tRNA incorporation and virion assembly. Aspartyl protease that mediates proteolytic cleavages of Gag and Gag-Pol polyproteins during or shortly after the release of the virion from the plasma membrane. Cleavages take place as an ordered, step-wise cascade to yield mature proteins. This process is called maturation. Displays maximal activity during the budding process just prior to particle release from the cell. Also cleaves Nef and Vif, probably concomitantly with viral structural proteins on maturation of virus particles. Hydrolyzes host EIF4GI and PABP1 in order to shut off the capped cellular mRNA translation. The resulting inhibition of cellular protein synthesis serves to ensure maximal viral gene expression and to evade host immune response. In terms of biological role, multifunctional enzyme that converts the viral RNA genome into dsDNA in the cytoplasm, shortly after virus entry into the cell. This enzyme displays a DNA polymerase activity that can copy either DNA or RNA templates, and a ribonuclease H (RNase H) activity that cleaves the RNA strand of RNA-DNA heteroduplexes in a partially processive 3' to 5' endonucleasic mode. Conversion of viral genomic RNA into dsDNA requires many steps. A tRNA(3)-Lys binds to the primer-binding site (PBS) situated at the 5'-end of the viral RNA. RT uses the 3' end of the tRNA primer to perform a short round of RNA-dependent minus-strand DNA synthesis. The reading proceeds through the U5 region and ends after the repeated (R) region which is present at both ends of viral RNA. The portion of the RNA-DNA heteroduplex is digested by the RNase H, resulting in a ssDNA product attached to the tRNA primer. This ssDNA/tRNA hybridizes with the identical R region situated at the 3' end of viral RNA. This template exchange, known as minus-strand DNA strong stop transfer, can be either intra- or intermolecular. RT uses the 3' end of this newly synthesized short ssDNA to perform the RNA-dependent minus-strand DNA synthesis of the whole template. RNase H digests the RNA template except for two polypurine tracts (PPTs) situated at the 5'-end and near the center of the genome. It is not clear if both polymerase and RNase H activities are simultaneous. RNase H probably can proceed both in a polymerase-dependent (RNA cut into small fragments by the same RT performing DNA synthesis) and a polymerase-independent mode (cleavage of remaining RNA fragments by free RTs). Secondly, RT performs DNA-directed plus-strand DNA synthesis using the PPTs that have not been removed by RNase H as primers. PPTs and tRNA primers are then removed by RNase H. The 3' and 5' ssDNA PBS regions hybridize to form a circular dsDNA intermediate. Strand displacement synthesis by RT to the PBS and PPT ends produces a blunt ended, linear dsDNA copy of the viral genome that includes long terminal repeats (LTRs) at both ends. Its function is as follows. Catalyzes viral DNA integration into the host chromosome, by performing a series of DNA cutting and joining reactions. This enzyme activity takes place after virion entry into a cell and reverse transcription of the RNA genome in dsDNA. The first step in the integration process is 3' processing. This step requires a complex comprising the viral genome, matrix protein, Vpr and integrase. This complex is called the pre-integration complex (PIC). The integrase protein removes 2 nucleotides from each 3' end of the viral DNA, leaving recessed CA OH's at the 3' ends. In the second step, the PIC enters cell nucleus. This process is mediated through integrase and Vpr proteins, and allows the virus to infect a non dividing cell. This ability to enter the nucleus is specific of lentiviruses, other retroviruses cannot and rely on cell division to access cell chromosomes. In the third step, termed strand transfer, the integrase protein joins the previously processed 3' ends to the 5' ends of strands of target cellular DNA at the site of integration. The 5'-ends are produced by integrase-catalyzed staggered cuts, 5 bp apart. A Y-shaped, gapped, recombination intermediate results, with the 5'-ends of the viral DNA strands and the 3' ends of target DNA strands remaining unjoined, flanking a gap of 5 bp. The last step is viral DNA integration into host chromosome. This involves host DNA repair synthesis in which the 5 bp gaps between the unjoined strands are filled in and then ligated. Since this process occurs at both cuts flanking the HIV genome, a 5 bp duplication of host DNA is produced at the ends of HIV-1 integration. Alternatively, Integrase may catalyze the excision of viral DNA just after strand transfer, this is termed disintegration. This Homo sapiens (Human) protein is Gag-Pol polyprotein (gag-pol).